The sequence spans 794 residues: Protein sel-1 homolog 1 (794 aa).

Positions 1–21 are cleaved as a signal peptide; the sequence is MQVRVRLLLLLCAVLLGSAAA. The tract at residues 22-737 is interaction with ERLEC1, OS9 and SYVN1; that stretch reads SSDEETNQDE…DLFTQLDMDQ (716 aa). Residues 22–738 are Lumenal-facing; sequence SSDEETNQDE…LFTQLDMDQL (717 aa). Residues 23–32 show a composition bias toward acidic residues; that stretch reads SDEETNQDES. Disordered regions lie at residues 23–46 and 73–105; these read SDEE…GSVK and QDEE…KTYE. One can recognise a Fibronectin type-II domain in the interval 122 to 170; it reads AHGEPCHFPFLFLDKEYDECTSDGREDGRLWCATTYDYKTDEKWGFCET. 2 disulfides stabilise this stretch: C127–C153 and C141–C168. 9 Sel1-like repeats span residues 183 to 218, 219 to 254, 255 to 290, 291 to 326, 373 to 409, 410 to 446, 447 to 482, 483 to 518, and 519 to 554; these read AEAI…GMNH, TKAL…EEGS, PKGQ…LGGN, LIAH…NHVA, VQAQ…NAGN, SHAM…DMGN, PVGQ…EQGW, VDGQ…QGGH, and ILAF…ERGR. N-linked (GlcNAc...) asparagine glycosylation is found at N195 and N217. N-linked (GlcNAc...) asparagine glycosylation is present at N272. Residues 352-537 are important for homodimerization and oligomerization; it reads NSGMLEEDLI…MHASGTGVMR (186 aa). N431 carries an N-linked (GlcNAc...) asparagine glycan. A glycan (N-linked (GlcNAc...) asparagine) is linked at N608. Sel1-like repeat units follow at residues 627–662 and 664–699; these read TVAR…EQQH and AQAM…EASP. Residues 643–723 are interaction with SYVN1; sequence TDVDYETAFI…VVYFLQYIRE (81 aa). The interval 738 to 794 is mediates retention in the endoplasmic reticulum; it reads LLGPEWDLYLMTIIALLLGTVIAYRQRQHQDIPVPRPPGPRPAPPQQEGPPEQQPPQ. Residues 739–759 form a helical membrane-spanning segment; it reads LGPEWDLYLMTIIALLLGTVI. Over 760 to 794 the chain is Cytoplasmic; it reads AYRQRQHQDIPVPRPPGPRPAPPQQEGPPEQQPPQ. The segment at 767 to 794 is disordered; the sequence is QDIPVPRPPGPRPAPPQQEGPPEQQPPQ. A compositionally biased stretch (pro residues) spans 771-794; sequence VPRPPGPRPAPPQQEGPPEQQPPQ.

Belongs to the sel-1 family. Homodimer and homooligomer. May form a complex with ERLEC1, HSPA5, OS9, and SYVN1. Interacts with FOXRED2 and EDEM1. Interacts with LPL and LMF1; may stabilize the complex formed by LPL and LMF1 and thereby promote the export of LPL dimers. Component of the HRD1 complex, which comprises at least SYNV1/HRD1, DERL1/2, FAM8A1, HERPUD1/HERP, OS9, SEL1L and UBE2J1. SYNV1 assembles with SEL1L and FAM8A1 through its transmembrane domains, but interaction with its cytoplasmic domain is required to confer stability to FAM8A1 and enhance recruitment of HERPUD1. The interaction with SYNV1/HRD1 is direct. In terms of processing, N-glycosylated.

The protein resides in the endoplasmic reticulum membrane. Its function is as follows. Plays a role in the endoplasmic reticulum quality control (ERQC) system also called ER-associated degradation (ERAD) involved in ubiquitin-dependent degradation of misfolded endoplasmic reticulum proteins. Enhances SYVN1 stability. Plays a role in LPL maturation and secretion. Required for normal differentiation of the pancreas epithelium, and for normal exocrine function and survival of pancreatic cells. May play a role in Notch signaling. This Rattus norvegicus (Rat) protein is Protein sel-1 homolog 1 (Sel1l).